Reading from the N-terminus, the 972-residue chain is mRNA transport regulator MTR10 (972 aa).

The protein localises to the nucleus. Functionally, involved in mRNA transport from nucleus to cytoplasm. The chain is mRNA transport regulator MTR10 (MTR10) from Saccharomyces cerevisiae (strain ATCC 204508 / S288c) (Baker's yeast).